The following is a 2377-amino-acid chain: DNA (cytosine-5-)-methyltransferase DMT5 (2377 aa).

Residues 24–56 form a disordered region; the sequence is GTADGAVNGGNIPNSQSQKRKRASPSPEIESEE. The Chromo; shadow subtype domain maps to 62 to 126; that stretch reads YEIDYIADSR…KNPGKPRLSP (65 aa). The disordered stretch occupies residues 150–282; that stretch reads GKSRAASSTD…KSSLPKAKLR (133 aa). Positions 201-213 are enriched in basic residues; the sequence is PTSKKVHPNKKCK. Acidic residues-rich tracts occupy residues 217-238 and 245-263; these read DDESDFVFEEGEWDEDEDDDND and EDDEDDEQERSAEEPESDE. Positions 268 to 282 are enriched in basic residues; the sequence is PAKKTKSSLPKAKLR. The 407-residue stretch at 347–753 folds into the SAM-dependent MTase C5-type domain; that stretch reads LRVATMCSGT…IAALKVACHK (407 aa). Cysteine 440 is an active-site residue. In terms of domain architecture, Helicase ATP-binding spans 1450 to 1771; it reads AERPVMVRGG…RSIATFMGIH (322 aa). ATP is bound at residue 1463–1470; that stretch reads DQVGYGKT. Disordered stretches follow at residues 1642–1680, 2313–2334, and 2347–2377; these read KGQAYRDKHDSDSKAKPITKEELERWEASEDEDDDENSK, KGRGSSISMTNEKRTPTLTVKS, and SSFRSKKRSMEARDAEGVSDDDENSELSDII. Residues 1645-1669 are compositionally biased toward basic and acidic residues; it reads AYRDKHDSDSKAKPITKEELERWEA. The 164-residue stretch at 2152–2315 folds into the Helicase C-terminal domain; sequence KLEHLVNLIH…EIPQEEYKGR (164 aa). Positions 2317–2334 are enriched in polar residues; that stretch reads SSISMTNEKRTPTLTVKS. Positions 2363-2377 are enriched in acidic residues; the sequence is GVSDDDENSELSDII.

This sequence in the N-terminal section; belongs to the class I-like SAM-binding methyltransferase superfamily. C5-methyltransferase family. The protein in the C-terminal section; belongs to the SNF2/RAD54 helicase family. In terms of assembly, interacts with SWI6. It depends on Mg(2+) as a cofactor.

The protein localises to the nucleus. The protein resides in the chromosome. It carries out the reaction a 2'-deoxycytidine in DNA + S-adenosyl-L-methionine + ATP + H2O = a 5-methyl-2'-deoxycytidine in DNA + S-adenosyl-L-homocysteine + ADP + phosphate + 2 H(+). Hemimethylated DNA substrates stimulate ATP hydrolysis and this is a prerequisite for methyltransferase activity. Functionally, ATP-dependent cytosine methylase that maintains DNA methylation by acting at hemimethylated palindromic 5'-CG-3' sites to produce symmetrically methylated DNA strands. DNA methylation may play a role in transcriptional silencing, particularly at transposable elements. This is DNA (cytosine-5-)-methyltransferase DMT5 from Cryptococcus neoformans var. grubii serotype A (strain H99 / ATCC 208821 / CBS 10515 / FGSC 9487) (Filobasidiella neoformans var. grubii).